Consider the following 439-residue polypeptide: Cysteine--tRNA ligase (439 aa).

Cys-28 contributes to the Zn(2+) binding site. The 'HIGH' region motif lies at Ile-30–His-40. Zn(2+) contacts are provided by Cys-209, His-234, and Glu-238. A 'KMSKS' region motif is present at residues Lys-266–Ser-270. Lys-269 contributes to the ATP binding site.

Belongs to the class-I aminoacyl-tRNA synthetase family. Monomer. Zn(2+) serves as cofactor.

It is found in the cytoplasm. It carries out the reaction tRNA(Cys) + L-cysteine + ATP = L-cysteinyl-tRNA(Cys) + AMP + diphosphate. The polypeptide is Cysteine--tRNA ligase (Shigella boydii serotype 4 (strain Sb227)).